The chain runs to 331 residues: Phosphoribosylformylglycinamidine cyclo-ligase (331 aa).

This sequence belongs to the AIR synthase family.

The protein localises to the cytoplasm. The catalysed reaction is 2-formamido-N(1)-(5-O-phospho-beta-D-ribosyl)acetamidine + ATP = 5-amino-1-(5-phospho-beta-D-ribosyl)imidazole + ADP + phosphate + H(+). It functions in the pathway purine metabolism; IMP biosynthesis via de novo pathway; 5-amino-1-(5-phospho-D-ribosyl)imidazole from N(2)-formyl-N(1)-(5-phospho-D-ribosyl)glycinamide: step 2/2. This Clostridium tetani (strain Massachusetts / E88) protein is Phosphoribosylformylglycinamidine cyclo-ligase.